Here is an 840-residue protein sequence, read N- to C-terminus: V-type proton ATPase 116 kDa subunit a 4 (840 aa).

Residues 1–390 are Cytoplasmic-facing; the sequence is MVSVFRSEEM…DAYGVGSYRE (390 aa). Residues 391 to 409 traverse the membrane as a helical segment; it reads INPAPYTIITFPFLFAVMF. At 410–411 the chain is on the vacuolar side; sequence GD. The chain crosses the membrane as a helical span at residues 412–428; the sequence is CGHGTVMLLAALWMILN. At 429 to 443 the chain is on the cytoplasmic side; the sequence is ERRLLSQKTDNEIWN. Residues 444–473 form a helical membrane-spanning segment; it reads TFFHGRYLILLMGIFSIYTGLIYNDCFSKS. Over 474-538 the chain is Vacuolar; the sequence is LNIFGSSWSV…ASNKLTFLNS (65 aa). A helical transmembrane segment spans residues 539–558; sequence YKMKMSVILGIVQMVFGVIL. The Cytoplasmic segment spans residues 559 to 576; the sequence is SLFNHIYFRRTLNIILQF. The chain crosses the membrane as a helical span at residues 577 to 597; sequence IPEMIFILCLFGYLVFMIIFK. The Vacuolar portion of the chain corresponds to 598–642; the sequence is WCCFDVHVSQHAPSILIHFINMFLFNYSDSSNAPLYKHQQEVQSF. A helical transmembrane segment spans residues 643–662; it reads FVVMALISVPWMLLIKPFIL. Residues 663 to 727 are Cytoplasmic-facing; it reads RASHRKSQLQ…DVFVHQAIHT (65 aa). The interval 675-704 is disordered; it reads RIQEDATENIEGDSSSPSSRSGQRTSADTH. The chain crosses the membrane as a helical span at residues 728-752; it reads IEYCLGCISNTASYLRLWALSLAHA. The Vacuolar portion of the chain corresponds to 753-773; the sequence is QLSEVLWTMVMNSGLQTRGWG. A helical membrane pass occupies residues 774–812; sequence GIVGVFIIFAVFAVLTVAILLIMEGLSAFLHALRLHWVE. Topologically, residues 813 to 840 are cytoplasmic; that stretch reads FQNKFYVGDGYKFSPFSFKHILDGTAEE.

It belongs to the V-ATPase 116 kDa subunit family. In terms of assembly, V-ATPase is a heteromultimeric enzyme made up of two complexes: the ATP-hydrolytic V1 complex and the proton translocation V0 complex. The V1 complex consists of three catalytic AB heterodimers that form a heterohexamer, three peripheral stalks each consisting of EG heterodimers, one central rotor including subunits D and F, and the regulatory subunits C and H. The proton translocation complex V0 consists of the proton transport subunit a, a ring of proteolipid subunits c9c'', rotary subunit d, subunits e and f, and the accessory subunits ATP6AP1/Ac45 and ATP6AP2/PRR. Interacts with the V1 complex V-ATPase subunit A ATP6V1A. Interacts with the V0 complex V-ATPase subunit c ATP6V0C. As to expression, expressed in adult and fetal kidney. Found in the inner ear.

The protein resides in the apical cell membrane. Its subcellular location is the basolateral cell membrane. Its function is as follows. Subunit of the V0 complex of vacuolar(H+)-ATPase (V-ATPase), a multisubunit enzyme composed of a peripheral complex (V1) that hydrolyzes ATP and a membrane integral complex (V0) that translocates protons. V-ATPase is responsible for acidifying and maintaining the pH of intracellular compartments and in some cell types, is targeted to the plasma membrane, where it is responsible for acidifying the extracellular environment. Involved in normal vectorial acid transport into the urine by the kidney. The polypeptide is V-type proton ATPase 116 kDa subunit a 4 (ATP6V0A4) (Homo sapiens (Human)).